Here is a 262-residue protein sequence, read N- to C-terminus: Phosphatidylserine decarboxylase proenzyme (262 aa).

Residues D86, H142, and S226 each act as charge relay system; for autoendoproteolytic cleavage activity in the active site. Residue S226 is the Schiff-base intermediate with substrate; via pyruvic acid; for decarboxylase activity of the active site. S226 carries the pyruvic acid (Ser); by autocatalysis modification.

Belongs to the phosphatidylserine decarboxylase family. PSD-B subfamily. Prokaryotic type I sub-subfamily. As to quaternary structure, heterodimer of a large membrane-associated beta subunit and a small pyruvoyl-containing alpha subunit. It depends on pyruvate as a cofactor. Post-translationally, is synthesized initially as an inactive proenzyme. Formation of the active enzyme involves a self-maturation process in which the active site pyruvoyl group is generated from an internal serine residue via an autocatalytic post-translational modification. Two non-identical subunits are generated from the proenzyme in this reaction, and the pyruvate is formed at the N-terminus of the alpha chain, which is derived from the carboxyl end of the proenzyme. The autoendoproteolytic cleavage occurs by a canonical serine protease mechanism, in which the side chain hydroxyl group of the serine supplies its oxygen atom to form the C-terminus of the beta chain, while the remainder of the serine residue undergoes an oxidative deamination to produce ammonia and the pyruvoyl prosthetic group on the alpha chain. During this reaction, the Ser that is part of the protease active site of the proenzyme becomes the pyruvoyl prosthetic group, which constitutes an essential element of the active site of the mature decarboxylase.

The protein resides in the cell membrane. It carries out the reaction a 1,2-diacyl-sn-glycero-3-phospho-L-serine + H(+) = a 1,2-diacyl-sn-glycero-3-phosphoethanolamine + CO2. The protein operates within phospholipid metabolism; phosphatidylethanolamine biosynthesis; phosphatidylethanolamine from CDP-diacylglycerol: step 2/2. In terms of biological role, catalyzes the formation of phosphatidylethanolamine (PtdEtn) from phosphatidylserine (PtdSer). The chain is Phosphatidylserine decarboxylase proenzyme from Bacillus cereus (strain B4264).